Consider the following 145-residue polypeptide: D-aminoacyl-tRNA deacylase (145 aa).

The Gly-cisPro motif, important for rejection of L-amino acids signature appears at 137-138 (GP).

The protein belongs to the DTD family. In terms of assembly, homodimer.

It localises to the cytoplasm. The catalysed reaction is glycyl-tRNA(Ala) + H2O = tRNA(Ala) + glycine + H(+). It carries out the reaction a D-aminoacyl-tRNA + H2O = a tRNA + a D-alpha-amino acid + H(+). In terms of biological role, an aminoacyl-tRNA editing enzyme that deacylates mischarged D-aminoacyl-tRNAs. Also deacylates mischarged glycyl-tRNA(Ala), protecting cells against glycine mischarging by AlaRS. Acts via tRNA-based rather than protein-based catalysis; rejects L-amino acids rather than detecting D-amino acids in the active site. By recycling D-aminoacyl-tRNA to D-amino acids and free tRNA molecules, this enzyme counteracts the toxicity associated with the formation of D-aminoacyl-tRNA entities in vivo and helps enforce protein L-homochirality. The chain is D-aminoacyl-tRNA deacylase from Rhodococcus jostii (strain RHA1).